A 234-amino-acid chain; its full sequence is Elongation factor Tu (234 aa).

A tr-type G domain is found at 1–125 (KNMITGAAQM…EVDAFIPTPE (125 aa)). 47–50 (NKQD) provides a ligand contact to GTP.

This sequence belongs to the TRAFAC class translation factor GTPase superfamily. Classic translation factor GTPase family. EF-Tu/EF-1A subfamily. As to quaternary structure, monomer.

The protein resides in the cytoplasm. The catalysed reaction is GTP + H2O = GDP + phosphate + H(+). GTP hydrolase that promotes the GTP-dependent binding of aminoacyl-tRNA to the A-site of ribosomes during protein biosynthesis. The polypeptide is Elongation factor Tu (tufA) (Prochlorothrix hollandica).